We begin with the raw amino-acid sequence, 25 residues long: Css54 (25 aa).

In terms of tissue distribution, expressed by the venom gland.

The protein resides in the secreted. It localises to the target cell membrane. Functionally, amphipathic peptide that shows antibacterial activity against E.coli (MIC=12.5 ug/ml) and S.aureus (MIC=12.5 ug/ml). Has hemolytic activity against human erythrocytes (25 uM provokes 83% of hemolysis). May act by disrupting the integrity of the bacterial cell membrane. Increases efficacy of antibiotics (ethambutol, pyrazinamide, isoniazid, rifampicin) when tested against S.aureus, probably by facilitating their incorporation into the bacteria. The protein is Css54 of Centruroides suffusus (Durango bark scorpion).